We begin with the raw amino-acid sequence, 393 residues long: MNRNTTTNKNANLNNSRNANAPGEAGHQNKTGLIYWTNPSKSGASFAATLVSLLILRNVNVISVLLKIGYMVLFTSFAVELSTKVLFDKGVVSRFGMQESPDLVGVLKPHIDRELDRLPALEDRIRKLVFAHRTRNNFTIGVSLYFLHGLFAIFSMNTVLIMTTIFLYTVPLIYDRKQARIDRAIDRMKDLVIHRFHKNYNKVVEKTEPYIDKIIPPQTDEGSYSTSISNENKSSTSQRNKSGLSSSEFDNMNDTSASKSGKDSYSTSQYNRAEYPVSQNENIGTLKSGKQEIPTEKDFNNRHENFSKPDVKTYDPRTVDIEEELAAHQRELEQNLKDGDYNLVGSKEIPDPITVPAPTRHTTKPAESQSIPIKNNETLHKTTHGLKQKLQHA.

Low complexity predominate over residues 1 to 21 (MNRNTTTNKNANLNNSRNANA). A disordered region spans residues 1–25 (MNRNTTTNKNANLNNSRNANAPGEA). Over 1–60 (MNRNTTTNKNANLNNSRNANAPGEAGHQNKTGLIYWTNPSKSGASFAATLVSLLILRNVN) the chain is Cytoplasmic. Positions 30-236 (KTGLIYWTNP…SISNENKSST (207 aa)) constitute a Reticulon domain. Residues 61 to 81 (VISVLLKIGYMVLFTSFAVEL) traverse the membrane as a helical segment. Topologically, residues 82 to 149 (STKVLFDKGV…IGVSLYFLHG (68 aa)) are lumenal. The N-linked (GlcNAc...) asparagine glycan is linked to Asn137. A helical transmembrane segment spans residues 150 to 170 (LFAIFSMNTVLIMTTIFLYTV). The Cytoplasmic portion of the chain corresponds to 171–393 (PLIYDRKQAR…HGLKQKLQHA (223 aa)). Disordered regions lie at residues 214–313 (IIPP…DVKT) and 339–393 (GDYN…LQHA). The span at 220-285 (DEGSYSTSIS…PVSQNENIGT (66 aa)) shows a compositional bias: polar residues. Ser278 is modified (phosphoserine). Residues 289-313 (GKQEIPTEKDFNNRHENFSKPDVKT) show a composition bias toward basic and acidic residues. Polar residues predominate over residues 365–376 (PAESQSIPIKNN). The span at 381–393 (KTTHGLKQKLQHA) shows a compositional bias: basic residues.

It localises to the endoplasmic reticulum membrane. The polypeptide is Reticulon-like protein 2 (RTN2) (Saccharomyces cerevisiae (strain ATCC 204508 / S288c) (Baker's yeast)).